The chain runs to 368 residues: N-acetylneuraminate epimerase (368 aa).

A signal peptide spans 1–19 (MNKTITALAILMASFAANA). Kelch repeat units lie at residues 40–84 (TVYI…AFID), 86–137 (NLYV…FVHN), 139–173 (KAYV…KINA), 174–219 (HYFD…VNKG), 222–265 (TWLI…VAGG), 287–336 (ENYQ…PWNN), and 338–367 (LLII…VTVQ). E228 functions as the Proton acceptor in the catalytic mechanism.

The protein belongs to the NanM family. In terms of assembly, homodimer.

It localises to the periplasm. It catalyses the reaction N-acetyl-alpha-neuraminate = N-acetyl-beta-neuraminate. Functionally, converts alpha-N-acetylneuranimic acid (Neu5Ac) to the beta-anomer, accelerating the equilibrium between the alpha- and beta-anomers. Probably facilitates sialidase-negative bacteria to compete successfully for limited amounts of extracellular Neu5Ac, which is likely taken up in the beta-anomer. In addition, the rapid removal of sialic acid from solution might be advantageous to the bacterium to damp down host responses. This Escherichia coli O157:H7 protein is N-acetylneuraminate epimerase.